An 824-amino-acid polypeptide reads, in one-letter code: Vesicle-fusing ATPase (824 aa).

ATP-binding positions include 582–587 (RGMIVW) and 622–629 (AKTGKTSL). T627 is a binding site for Mg(2+).

The protein belongs to the AAA ATPase family. As to quaternary structure, homohexamer. It depends on Mg(2+) as a cofactor.

The protein resides in the cytoplasm. The catalysed reaction is ATP + H2O = ADP + phosphate + H(+). Its function is as follows. Required for vesicle-mediated transport. Catalyzes the fusion of transport vesicles within the Golgi cisternae. Is also required for transport from the endoplasmic reticulum to the Golgi stack. Seems to function as a fusion protein required for the delivery of cargo proteins to all compartments of the Golgi stack independent of vesicle origin. The polypeptide is Vesicle-fusing ATPase (nsf-1) (Caenorhabditis elegans).